The primary structure comprises 994 residues: Integrator complex subunit 5 (994 aa).

The tract at residues 559 to 586 is disordered; that stretch reads NSNNNNELCNGKDYGKRTKLEPGEDKVD. A compositionally biased stretch (basic and acidic residues) spans 571 to 583; it reads DYGKRTKLEPGED. Transmembrane regions (helical) follow at residues 769–786 and 810–826; these read YSLV…DVMY and AFIN…LIAG.

This sequence belongs to the Integrator subunit 5 family. As to quaternary structure, belongs to the multiprotein complex Integrator, at least composed of IntS1, IntS2, IntS3, IntS4, omd/IntS5, IntS6, defl/IntS7, IntS8, IntS9, IntS10, IntS11, IntS12, asun/IntS13, IntS14 and IntS15. The core complex associates with protein phosphatase 2A subunits mts/PP2A and Pp2A-29B, to form the Integrator-PP2A (INTAC) complex.

It is found in the nucleus membrane. It localises to the nucleus. The protein localises to the cytoplasm. Component of the integrator complex, a multiprotein complex that terminates RNA polymerase II (Pol II) transcription in the promoter-proximal region of genes. The integrator complex provides a quality checkpoint during transcription elongation by driving premature transcription termination of transcripts that are unfavorably configured for transcriptional elongation: the complex terminates transcription by (1) catalyzing dephosphorylation of the C-terminal domain (CTD) of Pol II subunit Polr2A/Rbp1 and Spt5, and (2) degrading the exiting nascent RNA transcript via endonuclease activity. The integrator complex is also involved in the 3'-end processing of the U7 snRNA, and also the spliceosomal snRNAs U1, U2, U4 and U5. The sequence is that of Integrator complex subunit 5 from Drosophila melanogaster (Fruit fly).